The primary structure comprises 550 residues: ATP-dependent RNA helicase MSS116, mitochondrial (550 aa).

Positions Met1–Asn11 are enriched in basic residues. The transit peptide at Met1 to Pro41 directs the protein to the mitochondrion. The segment at Met1–Glu51 is disordered. The Q motif motif lies at Phe71 to Gln99. Residues Thr103–His285 form the Helicase ATP-binding domain. Ala116–Thr123 provides a ligand contact to ATP. Positions Asp230–Asp233 match the DEAD box motif. One can recognise a Helicase C-terminal domain in the interval Ala316–Thr472.

This sequence belongs to the DEAD box helicase family. DDX18/HAS1 subfamily.

Its subcellular location is the mitochondrion matrix. It carries out the reaction ATP + H2O = ADP + phosphate + H(+). ATP-dependent RNA helicase required for mitochondrial splicing of group I and II introns. Also required for efficient mitochondrial translation. In Phaeosphaeria nodorum (strain SN15 / ATCC MYA-4574 / FGSC 10173) (Glume blotch fungus), this protein is ATP-dependent RNA helicase MSS116, mitochondrial (MSS116).